The following is a 196-amino-acid chain: Macrophage infectivity potentiator (196 aa).

Positions 1 to 29 are cleaved as a signal peptide; that stretch reads MHRENYFSKIAFCLLGVLFLSCITSVQTV. The region spanning 85–171 is the PPIase FKBP-type domain; the sequence is DDKCEVHYTG…EFDVELISIK (87 aa).

The protein belongs to the FKBP-type PPIase family.

The protein resides in the secreted. It localises to the extracellular space. The catalysed reaction is [protein]-peptidylproline (omega=180) = [protein]-peptidylproline (omega=0). Its activity is regulated as follows. Strongly inhibited by FK506 and L-685,818. Essential virulence factor associated with macrophage infectivity. Exhibits PPIase activity. The polypeptide is Macrophage infectivity potentiator (MIP) (Trypanosoma cruzi).